Consider the following 168-residue polypeptide: SPbeta prophage-derived uncharacterized protein YomW (168 aa).

The chain is SPbeta prophage-derived uncharacterized protein YomW (yomW) from Bacillus subtilis (strain 168).